Reading from the N-terminus, the 150-residue chain is MSNFLGSHAINMDAKGRLAIPTKVREELAQLCGGRIVLTANADEEKCLLLYPEPEWEVLRPKIEALPNMNKAAKRLQRLILGNAALMELDASGRILVPQTLRNHANLEKRLMLVGLGKKYELWSEESWNAYLDASAADEEMPPEMEALSL.

SpoVT-AbrB domains lie at 7-55 and 84-127; these read SHAI…PEPE and AALM…SEES.

It belongs to the MraZ family. Forms oligomers.

The protein resides in the cytoplasm. It localises to the nucleoid. This Marinobacter nauticus (strain ATCC 700491 / DSM 11845 / VT8) (Marinobacter aquaeolei) protein is Transcriptional regulator MraZ.